A 424-amino-acid polypeptide reads, in one-letter code: Hydrolase ORFZ (424 aa).

The Nucleophile role is filled by Ser243.

It belongs to the AB hydrolase superfamily. FUS2 hydrolase family. Homodimer.

It functions in the pathway secondary metabolite biosynthesis. Its function is as follows. Hydrolyase; part of the gene cluster that mediates the biosynthesis of a tyrosine-derived cytochalasan acting as a fungal signal recognized by resistant rice plants and leads to avirulence in Pi33 resistant rice cultivars. The first step in the pathway is catalyzed by the hybrid PKS-NRPS ACE1, assisted by the enoyl reductase RAP1, that are responsible for fusion of the tyrosine precursor and the polyketide backbone. The polyketide synthase module (PKS) of ACE1 is responsible for the synthesis of the polyketide backbone and the downstream nonribosomal peptide synthetase (NRPS) amidates the carboxyl end of the polyketide with the tyrosine precursor. Because ACE1 lacks a designated enoylreductase (ER) domain, the required activity is provided the enoyl reductase RAP1. Reduction by the hydrolyase ORFZ, followed by dehydration and intra-molecular Diels-Alder cyclization by the Diels-Alderase ORF3 then yield the required isoindolone-fused macrocycle. A number of oxidative steps catalyzed by the tailoring enzymes identified within the cluster, including cytochrome P450 monooxygenases CYP1 to CYP4, the FAD-linked oxidoreductase OXR2 and the short-chain dehydrogenase/reductase OXR1, are further required to afford the final cytochalasans that confer avirulence and which have still to be identified. The monooxygenase CYP1 has been shown to be a site-selective C-18 hydroxylase whereas the function of CYP3 is the site-selective epoxidation of the C-6/C-7 olefin that is present in some intermediate compounds. Finally, SYN2 and RAP2 are not required for avirulence in Pi33 resistant rice cultivars. In Pyricularia oryzae (strain 70-15 / ATCC MYA-4617 / FGSC 8958) (Rice blast fungus), this protein is Hydrolase ORFZ.